The following is a 303-amino-acid chain: 4-hydroxy-3-methylbut-2-enyl diphosphate reductase (303 aa).

C12 lines the [4Fe-4S] cluster pocket. The (2E)-4-hydroxy-3-methylbut-2-enyl diphosphate site is built by H42 and H75. Positions 42 and 75 each coordinate dimethylallyl diphosphate. Isopentenyl diphosphate-binding residues include H42 and H75. C97 lines the [4Fe-4S] cluster pocket. H125 is a binding site for (2E)-4-hydroxy-3-methylbut-2-enyl diphosphate. H125 serves as a coordination point for dimethylallyl diphosphate. Position 125 (H125) interacts with isopentenyl diphosphate. E127 (proton donor) is an active-site residue. S164 contacts (2E)-4-hydroxy-3-methylbut-2-enyl diphosphate. A [4Fe-4S] cluster-binding site is contributed by C192. (2E)-4-hydroxy-3-methylbut-2-enyl diphosphate contacts are provided by S220, S221, N222, and S264. The dimethylallyl diphosphate site is built by S220, S221, N222, and S264. S220, S221, N222, and S264 together coordinate isopentenyl diphosphate.

This sequence belongs to the IspH family. [4Fe-4S] cluster serves as cofactor.

It carries out the reaction isopentenyl diphosphate + 2 oxidized [2Fe-2S]-[ferredoxin] + H2O = (2E)-4-hydroxy-3-methylbut-2-enyl diphosphate + 2 reduced [2Fe-2S]-[ferredoxin] + 2 H(+). The catalysed reaction is dimethylallyl diphosphate + 2 oxidized [2Fe-2S]-[ferredoxin] + H2O = (2E)-4-hydroxy-3-methylbut-2-enyl diphosphate + 2 reduced [2Fe-2S]-[ferredoxin] + 2 H(+). Its pathway is isoprenoid biosynthesis; dimethylallyl diphosphate biosynthesis; dimethylallyl diphosphate from (2E)-4-hydroxy-3-methylbutenyl diphosphate: step 1/1. The protein operates within isoprenoid biosynthesis; isopentenyl diphosphate biosynthesis via DXP pathway; isopentenyl diphosphate from 1-deoxy-D-xylulose 5-phosphate: step 6/6. Its function is as follows. Catalyzes the conversion of 1-hydroxy-2-methyl-2-(E)-butenyl 4-diphosphate (HMBPP) into a mixture of isopentenyl diphosphate (IPP) and dimethylallyl diphosphate (DMAPP). Acts in the terminal step of the DOXP/MEP pathway for isoprenoid precursor biosynthesis. The sequence is that of 4-hydroxy-3-methylbut-2-enyl diphosphate reductase from Neorickettsia sennetsu (strain ATCC VR-367 / Miyayama) (Ehrlichia sennetsu).